The chain runs to 151 residues: Myosin light polypeptide 6 (151 aa).

Cys2 is subject to N-acetylcysteine. Residues 7 to 42 (DQTAEFKEAFQLFDRTGDGKILYSQCGDVMRALGQN) form the EF-hand 1 domain. A Phosphoserine modification is found at Ser57. Lys81 carries the N6-acetyllysine modification. An EF-hand 2 domain is found at 84-119 (GTYEDYVEGLRVFDKEGNGTVMGAEIRHVLVTLGEK).

In terms of assembly, myosin is a hexamer of 2 heavy chains and 4 light chains. Interacts with SPATA6.

Functionally, regulatory light chain of myosin. Does not bind calcium. The sequence is that of Myosin light polypeptide 6 (MYL6) from Bos taurus (Bovine).